A 189-amino-acid chain; its full sequence is NADH-quinone oxidoreductase subunit B (189 aa).

Positions 39, 40, 104, and 135 each coordinate [4Fe-4S] cluster.

Belongs to the complex I 20 kDa subunit family. In terms of assembly, NDH-1 is composed of 14 different subunits. Subunits NuoB, C, D, E, F, and G constitute the peripheral sector of the complex. The cofactor is [4Fe-4S] cluster.

It localises to the cell inner membrane. It catalyses the reaction a quinone + NADH + 5 H(+)(in) = a quinol + NAD(+) + 4 H(+)(out). Its function is as follows. NDH-1 shuttles electrons from NADH, via FMN and iron-sulfur (Fe-S) centers, to quinones in the respiratory chain. The immediate electron acceptor for the enzyme in this species is believed to be a menaquinone. Couples the redox reaction to proton translocation (for every two electrons transferred, four hydrogen ions are translocated across the cytoplasmic membrane), and thus conserves the redox energy in a proton gradient. This Chlorobium limicola (strain DSM 245 / NBRC 103803 / 6330) protein is NADH-quinone oxidoreductase subunit B.